Consider the following 306-residue polypeptide: UDP-3-O-acyl-N-acetylglucosamine deacetylase (306 aa).

Zn(2+)-binding residues include histidine 79, histidine 238, and aspartate 242. Histidine 265 (proton donor) is an active-site residue.

It belongs to the LpxC family. Zn(2+) is required as a cofactor.

The enzyme catalyses a UDP-3-O-[(3R)-3-hydroxyacyl]-N-acetyl-alpha-D-glucosamine + H2O = a UDP-3-O-[(3R)-3-hydroxyacyl]-alpha-D-glucosamine + acetate. It participates in glycolipid biosynthesis; lipid IV(A) biosynthesis; lipid IV(A) from (3R)-3-hydroxytetradecanoyl-[acyl-carrier-protein] and UDP-N-acetyl-alpha-D-glucosamine: step 2/6. Functionally, catalyzes the hydrolysis of UDP-3-O-myristoyl-N-acetylglucosamine to form UDP-3-O-myristoylglucosamine and acetate, the committed step in lipid A biosynthesis. The protein is UDP-3-O-acyl-N-acetylglucosamine deacetylase of Shewanella piezotolerans (strain WP3 / JCM 13877).